Here is a 421-residue protein sequence, read N- to C-terminus: Serine hydroxymethyltransferase (421 aa).

Residues L121 and 125–127 (GHL) contribute to the (6S)-5,6,7,8-tetrahydrofolate site. K229 carries the post-translational modification N6-(pyridoxal phosphate)lysine.

The protein belongs to the SHMT family. In terms of assembly, homodimer. Pyridoxal 5'-phosphate serves as cofactor.

The protein localises to the cytoplasm. It carries out the reaction (6R)-5,10-methylene-5,6,7,8-tetrahydrofolate + glycine + H2O = (6S)-5,6,7,8-tetrahydrofolate + L-serine. Its pathway is one-carbon metabolism; tetrahydrofolate interconversion. It functions in the pathway amino-acid biosynthesis; glycine biosynthesis; glycine from L-serine: step 1/1. Its function is as follows. Catalyzes the reversible interconversion of serine and glycine with tetrahydrofolate (THF) serving as the one-carbon carrier. This reaction serves as the major source of one-carbon groups required for the biosynthesis of purines, thymidylate, methionine, and other important biomolecules. Also exhibits THF-independent aldolase activity toward beta-hydroxyamino acids, producing glycine and aldehydes, via a retro-aldol mechanism. This is Serine hydroxymethyltransferase from Actinobacillus pleuropneumoniae serotype 7 (strain AP76).